The following is a 329-amino-acid chain: MKIYYDQDADLSLLADKTVAIIGYGSQGHAHAQNLRDSGVKVVIGQRPGGPNWELAKENGFTPMSAAEAAAAADLIMILVPDQHQKAVYEKDVLPHLKPGKMLLFAHGFNIHFQQIVPPADVDVAMVAPKGPGHLVRRVYTEGAGVPCLIAIHQNATGKAMETALAYAKGVGGTRGGVLTTTFKEETETDLFGEQAVLCGGAAELVKAGFETLCEAGYQPEIAYFECLHELKLIVDLMYEGGLSRMRYSISDTAEYGDYVSGPRVVTDETRAEMRQILKEIQDGTFARDFIMENMSGRAHFLSMRRINAEHPIEKVGAKLRGMMSWLKK.

The KARI N-terminal Rossmann domain maps to 1–181; that stretch reads MKIYYDQDAD…GGTRGGVLTT (181 aa). Residues 24-27, arginine 47, and 82-85 contribute to the NADP(+) site; these read YGSQ and DQHQ. Histidine 107 is a catalytic residue. Glycine 133 is a binding site for NADP(+). The region spanning 182-327 is the KARI C-terminal knotted domain; it reads TFKEETETDL…AKLRGMMSWL (146 aa). Aspartate 190, glutamate 194, glutamate 226, and glutamate 230 together coordinate Mg(2+). Residue serine 251 participates in substrate binding.

This sequence belongs to the ketol-acid reductoisomerase family. Mg(2+) is required as a cofactor.

The catalysed reaction is (2R)-2,3-dihydroxy-3-methylbutanoate + NADP(+) = (2S)-2-acetolactate + NADPH + H(+). The enzyme catalyses (2R,3R)-2,3-dihydroxy-3-methylpentanoate + NADP(+) = (S)-2-ethyl-2-hydroxy-3-oxobutanoate + NADPH + H(+). It functions in the pathway amino-acid biosynthesis; L-isoleucine biosynthesis; L-isoleucine from 2-oxobutanoate: step 2/4. Its pathway is amino-acid biosynthesis; L-valine biosynthesis; L-valine from pyruvate: step 2/4. In terms of biological role, involved in the biosynthesis of branched-chain amino acids (BCAA). Catalyzes an alkyl-migration followed by a ketol-acid reduction of (S)-2-acetolactate (S2AL) to yield (R)-2,3-dihydroxy-isovalerate. In the isomerase reaction, S2AL is rearranged via a Mg-dependent methyl migration to produce 3-hydroxy-3-methyl-2-ketobutyrate (HMKB). In the reductase reaction, this 2-ketoacid undergoes a metal-dependent reduction by NADPH to yield (R)-2,3-dihydroxy-isovalerate. The protein is Ketol-acid reductoisomerase (NADP(+)) of Solidesulfovibrio magneticus (strain ATCC 700980 / DSM 13731 / RS-1) (Desulfovibrio magneticus).